Consider the following 341-residue polypeptide: Glyceraldehyde-3-phosphate dehydrogenase 1 (341 aa).

NAD(+) contacts are provided by residues 13–14 (RI), Asp-35, and Lys-85. D-glyceraldehyde 3-phosphate contacts are provided by residues 157–159 (SCT), Thr-188, 217–218 (TG), and Arg-240. Cys-158 serves as the catalytic Nucleophile. Position 322 (Asn-322) interacts with NAD(+).

It belongs to the glyceraldehyde-3-phosphate dehydrogenase family. Homotetramer.

It is found in the cytoplasm. It carries out the reaction D-glyceraldehyde 3-phosphate + phosphate + NAD(+) = (2R)-3-phospho-glyceroyl phosphate + NADH + H(+). Its pathway is carbohydrate degradation; glycolysis; pyruvate from D-glyceraldehyde 3-phosphate: step 1/5. The chain is Glyceraldehyde-3-phosphate dehydrogenase 1 (gpd-1) from Caenorhabditis elegans.